Reading from the N-terminus, the 979-residue chain is Disks large-associated protein 3 (979 aa).

A compositionally biased stretch (basic and acidic residues) spans 1–10; that stretch reads MRGYHGDRGS. 6 disordered regions span residues 1–20, 52–95, 136–169, 182–291, 400–429, and 537–581; these read MRGYHGDRGSHPRPARFADQ, AGLG…MYPG, FHTLPYQRGPAGAGPGPAPGTGTAPEPRSESPSR, AKSH…CLEG, AMGDEESGDSDGSPKTSPKAVARRFTTRRS, and FRKA…RCSS. Position 58 is a phosphoserine (S58). The segment covering 73–86 has biased composition (gly residues); it reads PEGGPAGAGVGGGS. Basic and acidic residues predominate over residues 190–202; sequence PGKRDYNGPKAEG. Residues 203–218 are compositionally biased toward gly residues; that stretch reads RGGSGGDSYPGPGSGG. A compositionally biased stretch (basic residues) spans 221–246; that stretch reads TSHHHHHHHHHHHHQSRHGKRSKSKD. Residues S406, S409, S412, and S416 each carry the phosphoserine modification. Residues 540-549 are compositionally biased toward pro residues; the sequence is APPPIPPGSQ. S643 and S645 each carry phosphoserine. 2 disordered regions span residues 741 to 790 and 908 to 940; these read EGYP…RASP and EEKKVPPPIPKKPLRGRGVPVKERSLDSVDRQR. 2 stretches are compositionally biased toward basic and acidic residues: residues 769–779 and 927–940; these read GRRDSWIERGS and PVKERSLDSVDRQR. Phosphoserine is present on residues S932, S935, and S967.

Belongs to the SAPAP family. Interacts with DLG4/PSD-95.

It localises to the cell membrane. Its subcellular location is the postsynaptic density. The protein resides in the synapse. Its function is as follows. May play a role in the molecular organization of synapses and neuronal cell signaling. Could be an adapter protein linking ion channel to the subsynaptic cytoskeleton. May induce enrichment of PSD-95/SAP90 at the plasma membrane. The sequence is that of Disks large-associated protein 3 (DLGAP3) from Homo sapiens (Human).